We begin with the raw amino-acid sequence, 268 residues long: Ribosomal RNA small subunit methyltransferase A (268 aa).

Residues Asn18, Leu20, Gly45, Glu66, Asp91, and Asn112 each contribute to the S-adenosyl-L-methionine site.

The protein belongs to the class I-like SAM-binding methyltransferase superfamily. rRNA adenine N(6)-methyltransferase family. RsmA subfamily.

The protein resides in the cytoplasm. It carries out the reaction adenosine(1518)/adenosine(1519) in 16S rRNA + 4 S-adenosyl-L-methionine = N(6)-dimethyladenosine(1518)/N(6)-dimethyladenosine(1519) in 16S rRNA + 4 S-adenosyl-L-homocysteine + 4 H(+). Its function is as follows. Specifically dimethylates two adjacent adenosines (A1518 and A1519) in the loop of a conserved hairpin near the 3'-end of 16S rRNA in the 30S particle. May play a critical role in biogenesis of 30S subunits. This is Ribosomal RNA small subunit methyltransferase A from Shewanella baltica (strain OS185).